Here is a 377-residue protein sequence, read N- to C-terminus: N-acetyldiaminopimelate deacetylase (377 aa).

Aspartate 69 is an active-site residue. The active-site Proton acceptor is the glutamate 128.

This sequence belongs to the peptidase M20A family. N-acetyldiaminopimelate deacetylase subfamily.

It catalyses the reaction N-acetyl-(2S,6S)-2,6-diaminopimelate + H2O = (2S,6S)-2,6-diaminopimelate + acetate. It functions in the pathway amino-acid biosynthesis; L-lysine biosynthesis via DAP pathway; LL-2,6-diaminopimelate from (S)-tetrahydrodipicolinate (acetylase route): step 3/3. Functionally, catalyzes the conversion of N-acetyl-diaminopimelate to diaminopimelate and acetate. This is N-acetyldiaminopimelate deacetylase from Streptococcus gordonii (strain Challis / ATCC 35105 / BCRC 15272 / CH1 / DL1 / V288).